The sequence spans 532 residues: Eukaryotic translation initiation factor 4B1 (532 aa).

Disordered stretches follow at residues 16–365 (EAER…LEEQ), 401–434 (KKLE…IIRG), and 451–532 (RFRQ…REGW). The segment covering 26-35 (AEATAATADT) has biased composition (low complexity). Gly residues-rich tracts occupy residues 105 to 120 (RLGG…SGGR) and 132 to 147 (WSGG…YGGG). Positions 167-180 (RADEVDDWGKEKKP) are enriched in basic and acidic residues. A Nuclear localization signal 1 motif is present at residues 177-184 (EKKPLPSF). A compositionally biased stretch (gly residues) spans 193 to 217 (SGDGGGFGGGGSGFGGGGGGGGGGL). The short motif at 237–244 (SSTFGSSF) is the Nuclear localization signal 2 element. The segment covering 237-247 (SSTFGSSFGDS) has biased composition (low complexity). Composition is skewed to basic and acidic residues over residues 249 to 263 (QEER…RKVE) and 286 to 310 (RPRE…EAKK). Residues 315–337 (TSRPTSAHSSRPSSAQSNRSESS) show a composition bias toward low complexity. Composition is skewed to basic and acidic residues over residues 355-365 (AKPREVLLEEQ), 401-416 (KKLE…KESD), 472-494 (ERTH…ERPR), and 507-520 (NEQR…KERG).

This sequence belongs to the eIF-4 subunit B family. In terms of assembly, homodimer. Nonspherical monomer. mRNA-discriminating component of initiation complexes. Phosphorylated.

Its subcellular location is the nucleus. Its function is as follows. Promotes the eIF4F and eIF4A RNA-dependent ATP-hydrolysis activity with different efficiency depending on mRNAs, thus providing mRNA discrimination during initiation of translation. This is Eukaryotic translation initiation factor 4B1 from Arabidopsis thaliana (Mouse-ear cress).